Here is a 223-residue protein sequence, read N- to C-terminus: Icarapin (223 aa).

Residues 1–19 (MKTLGVLFIAAWFIACTHS) form the signal peptide. N-linked (GlcNAc...) asparagine glycosylation is found at Asn126, Asn142, Asn168, and Asn193. A compositionally biased stretch (polar residues) spans 186-203 (LPTLIGKNETSTQSSRSV). The interval 186–223 (LPTLIGKNETSTQSSRSVESVEDFDNEIPKNQGDVLTA) is disordered.

Expressed by the venom duct.

It localises to the secreted. The sequence is that of Icarapin from Apis mellifera carnica (Carniolan honeybee).